The chain runs to 296 residues: Diaminopimelate epimerase (296 aa).

Positions 17, 49, and 69 each coordinate substrate. Cys78 (proton donor) is an active-site residue. Residues 79–80, Asn171, Asn205, and 223–224 each bind substrate; these read GN and ER. Cys232 functions as the Proton acceptor in the catalytic mechanism. Residue 233-234 participates in substrate binding; sequence GT.

Belongs to the diaminopimelate epimerase family. In terms of assembly, homodimer.

Its subcellular location is the cytoplasm. It catalyses the reaction (2S,6S)-2,6-diaminopimelate = meso-2,6-diaminopimelate. The protein operates within amino-acid biosynthesis; L-lysine biosynthesis via DAP pathway; DL-2,6-diaminopimelate from LL-2,6-diaminopimelate: step 1/1. Functionally, catalyzes the stereoinversion of LL-2,6-diaminopimelate (L,L-DAP) to meso-diaminopimelate (meso-DAP), a precursor of L-lysine and an essential component of the bacterial peptidoglycan. In Methylorubrum extorquens (strain CM4 / NCIMB 13688) (Methylobacterium extorquens), this protein is Diaminopimelate epimerase.